A 356-amino-acid polypeptide reads, in one-letter code: Carbohydrate sulfotransferase 10 (356 aa).

At 1 to 6 (MHHQWL) the chain is on the cytoplasmic side. A helical; Signal-anchor for type II membrane protein transmembrane segment spans residues 7–27 (LLAACFWVIFMFMVASKFITL). Residues 28 to 356 (TFKDPDGYSA…GYQKPDFLLN (329 aa)) are Lumenal-facing. An N-linked (GlcNAc...) asparagine glycan is attached at N99. Residues 127–133 (PKVGNTQ) and 189–197 (RDPFERLIS) each bind 3'-phosphoadenylyl sulfate. N-linked (GlcNAc...) asparagine glycans are attached at residues N228 and N316.

It belongs to the sulfotransferase 2 family.

The protein resides in the golgi apparatus membrane. The catalysed reaction is 3-O-{beta-D-GlcA-(1-&gt;[3)-alpha-D-Xyl-(1-&gt;3)-beta-D-GlcA-(1-&gt;](n)-4)-beta-D-Xyl-(1-&gt;4)-Rib-ol-P-Rib-ol-P-3-beta-D-GalNAc-(1-&gt;3)-beta-D-GlcNAc-(1-&gt;4)-O-6-P-alpha-D-Man}-L-Thr-[protein] + 3'-phosphoadenylyl sulfate = 3-O-{O-3-S-beta-D-GlcA-(1-&gt;[3)-alpha-D-Xyl-(1-&gt;3)-beta-D-GlcA-(1-&gt;](n)-4)-beta-D-Xyl-(1-&gt;4)-Rib-ol-P-Rib-ol-P-3-beta-D-GalNAc-(1-&gt;3)-beta-D-GlcNAc-(1-&gt;4)-O-6-P-alpha-D-Man}-L-Thr-[protein] + adenosine 3',5'-bisphosphate + H(+). It catalyses the reaction 17beta-estradiol 3-O-(beta-D-glucuronate) + 3'-phosphoadenylyl sulfate = 17beta-estradiol 3-O-(3-sulfo-beta-D-glucuronate) + adenosine 3',5'-bisphosphate + H(+). It carries out the reaction 17beta-estradiol 3-O-(beta-D-glucuronate) 17-sulfate + 3'-phosphoadenylyl sulfate = 17beta-estradiol 3-O-(3-sulfo-beta-D-glucuronate) 17-sulfate + adenosine 3',5'-bisphosphate + H(+). The enzyme catalyses 17beta-estradiol 17-O-(beta-D-glucuronate) + 3'-phosphoadenylyl sulfate = 17beta-estradiol 17-O-(3-sulfo-beta-D-glucuronate) + adenosine 3',5'-bisphosphate + H(+). The catalysed reaction is 16alpha,17beta-estriol 3-O-(beta-D-glucuronate) + 3'-phosphoadenylyl sulfate = 16alpha,17beta-estriol 3-O-(3-sulfo-beta-D-glucuronate) + adenosine 3',5'-bisphosphate + H(+). It catalyses the reaction 16alpha,17beta-estriol 16-O-(beta-D-glucuronate) + 3'-phosphoadenylyl sulfate = 16alpha,17beta-estriol 16-O-(3-sulfo-beta-D-glucuronate) + adenosine 3',5'-bisphosphate + H(+). It carries out the reaction 16alpha,17beta-estriol 17-O-(beta-D-glucuronate) + 3'-phosphoadenylyl sulfate = 16alpha,17beta-estriol 17-O-(3-sulfo-beta-D-glucuronate) + adenosine 3',5'-bisphosphate + H(+). The enzyme catalyses estrone 3-O-(beta-D-glucuronate) + 3'-phosphoadenylyl sulfate = estrone 3-O-(3-sulfo-beta-D-glucuronate) + adenosine 3',5'-bisphosphate + H(+). The catalysed reaction is 3alpha,20alpha-dihydroxy-5beta-pregnane 3-O-(beta-D-glucuronate) + 3'-phosphoadenylyl sulfate = 3alpha,20alpha-dihydroxy-5beta-pregnane 3-O-(3-sulfo-beta-D-glucuronate) + adenosine 3',5'-bisphosphate + H(+). It catalyses the reaction testosterone 17-O-(beta-D-glucuronate) + 3'-phosphoadenylyl sulfate = testosterone 17-O-(3-sulfo-beta-D-glucuronate) + adenosine 3',5'-bisphosphate + H(+). It carries out the reaction 3beta-androst-5-en-17-one 3-O-(beta-D-glucuronate) + 3'-phosphoadenylyl sulfate = 3beta-androst-5-en-17-one 3-O-(3-sulfo-beta-D-glucuronate) + adenosine 3',5'-bisphosphate + H(+). The enzyme catalyses 3alpha,17alpha-dihydroxy-5beta-androstane-11-one-17beta-carboxylate 3-O-(beta-D-glucuronate) + 3'-phosphoadenylyl sulfate = 3alpha,17alpha-dihydroxy-5beta-androstane-11-one-17beta-carboxylate 3-O-(3-sulfo-beta-D-glucuronate) + adenosine 3',5'-bisphosphate + H(+). The catalysed reaction is 3alpha-hydroxyetiocholan-17-one 3-O-(beta-D-glucuronate) + 3'-phosphoadenylyl sulfate = 3alpha-hydroxyetiocholan-17-one 3-O-(3-sulfo-beta-D-glucuronate) + adenosine 3',5'-bisphosphate + H(+). The protein operates within steroid metabolism. Its pathway is protein modification; carbohydrate sulfation. Catalyzes the transfer of sulfate from 3'-phosphoadenylyl sulfate (PAPS) to position 3 of terminal glucuronic acid of both protein- and lipid-linked oligosaccharides. Participates in biosynthesis of HNK-1 carbohydrate structure 3-O-sulfo-beta-D-GlcA-(1-&gt;3)-beta-D-Gal-(1-&gt;4)-D-GlcNAc-R, a sulfated glucuronyl-lactosaminyl residue carried by many neural recognition molecules, which is involved in cell interactions during ontogenetic development and in synaptic plasticity in the adult. May be indirectly involved in synapse plasticity of the hippocampus, via its role in HNK-1 biosynthesis. Sulfates terminal glucuronyl residue of the laminin globular (LG)-domain binding epitope on DAG1/alpha-dystroglycan and prevents further polymerization by LARGE1 glycosyltransferase. Likely defines the chain length of LG epitope, conferring binding specificity to extracellular matrix components. Plays a role in down-regulating the steroid hormones. Sulfates glucuronidated estrogens and androgens with an impact in hormone cycle and fertility. Has a preference for glucuronyl moiety at the 3-hydroxyl group of a sterol ring rather than the 17-hydroxyl group, showing high catalytic efficiency for 17beta-estradiol 3-O-(beta-D-glucuronate) and dehydroepiandrosterone 3-O-(beta-D-glucuronate) hormones. In Mus musculus (Mouse), this protein is Carbohydrate sulfotransferase 10.